A 378-amino-acid chain; its full sequence is Vacuolar membrane protein CAGL0J10076g (378 aa).

Residues 18-70 (RGLPRLVTTSTTPTPTTEPTTEPTTTKDETSQTSATDASTATTSTAATSTAAT) form a disordered region. Low complexity-rich tracts occupy residues 25–41 (TTST…TEPT) and 48–70 (SQTS…TAAT). A helical membrane pass occupies residues 118-138 (FIAVGSIAGAILMLIFLWWSI). A disordered region spans residues 299–368 (NDYDTPLIPD…ARDHRKTPSM (70 aa)). Positions 321 to 337 (RSHRKTPSNDKYHRRNR) are enriched in basic residues. A compositionally biased stretch (low complexity) spans 343 to 356 (SPSRSPTRTPIRTR).

It belongs to the PRM5 family.

It is found in the vacuole membrane. The polypeptide is Vacuolar membrane protein CAGL0J10076g (Candida glabrata (strain ATCC 2001 / BCRC 20586 / JCM 3761 / NBRC 0622 / NRRL Y-65 / CBS 138) (Yeast)).